The sequence spans 179 residues: GTP-dependent dephospho-CoA kinase (179 aa).

Positions 55, 57, 74, 76, and 128 each coordinate GTP.

This sequence belongs to the GTP-dependent DPCK family.

It catalyses the reaction 3'-dephospho-CoA + GTP = GDP + CoA + H(+). It functions in the pathway cofactor biosynthesis; coenzyme A biosynthesis. Catalyzes the GTP-dependent phosphorylation of the 3'-hydroxyl group of dephosphocoenzyme A to form coenzyme A (CoA). The protein is GTP-dependent dephospho-CoA kinase of Saccharolobus solfataricus (strain ATCC 35092 / DSM 1617 / JCM 11322 / P2) (Sulfolobus solfataricus).